Reading from the N-terminus, the 2113-residue chain is Unconventional myosin-VIIb (2113 aa).

Residues 65–760 form the Myosin motor domain; that stretch reads QGVDDMIRLG…QDTVLEIRRS (696 aa). 158 to 165 provides a ligand contact to ATP; the sequence is GESGAGKT. The tract at residues 637 to 659 is actin-binding; it reads LDQLMRILTNCQPYFVRCIKPNE. 6 IQ domains span residues 745-765, 763-792, 786-815, 809-838, 832-861, and 855-884; these read IFLK…ALDG, LDGA…AAVT, QRRA…GFER, ILVG…RIVQ, MRQR…AVVI, and KRRA…TGPQ. The residue at position 904 (Ser904) is a Phosphoserine. The segment at 962–1578 is mediates interaction with ANKS4B; it reads EEEVDSLAEY…STQLLSLLAM (617 aa). The 201-residue stretch at 989–1189 folds into the MyTH4 1 domain; it reads HIQKPLRYPL…PTWLELQAVK (201 aa). Residues 1194-1503 enclose the FERM 1 domain; that stretch reads IPIQVILATG…GGLKERSVFA (310 aa). A Phosphothreonine modification is found at Thr1339. A Phosphoserine modification is found at Ser1368. Positions 1497 to 2113 are mediates interaction with CDHR2, CDHR5 and USH1C; it reads KERSVFAMAL…GFRAPAPANP (617 aa). The 67-residue stretch at 1498–1564 folds into the SH3 domain; it reads ERSVFAMALQ…PTACLYTIPS (67 aa). 2 MyTH4 domains span residues 1641–1790 and 1790–1896; these read YSPE…KAAE and EQNV…LNVT. Ser1642 carries the post-translational modification Phosphoserine. In terms of domain architecture, FERM 2 spans 1796–2099; it reads LHHEVYLPND…SYVQQLLNTV (304 aa).

This sequence belongs to the TRAFAC class myosin-kinesin ATPase superfamily. Myosin family. In terms of assembly, part of the IMAC/intermicrovillar adhesion complex/intermicrovillar tip-link complex composed of ANKS4B, MYO7B, USH1C, CDHR2 and CDHR5. Interacts with CDHR2. Interacts with CDHR5. Interacts with USH1C. Interacts with ANKS4B; requires initial interaction with USH1C. Interacts with CALML4; the interaction mediates the association of CALML4 with the IMAC/intermicrovillar adhesion complex. In terms of tissue distribution, expressed primarily in kidney and intestine. Detected in proximal tubule cells of the kidney and enterocytes of the intestine, specifically the distal tips of apical microvilli on these transporting epithelial cells (at protein level).

The protein localises to the cytoplasm. The protein resides in the cytoskeleton. It is found in the cell projection. Its subcellular location is the microvillus. In terms of biological role, myosins are actin-based motor molecules with ATPase activity. Their highly divergent tails are presumed to bind to membranous compartments, which would be moved relative to actin filaments. As part of the intermicrovillar adhesion complex/IMAC plays a role in epithelial brush border differentiation, controlling microvilli organization and length. May link the complex to the actin core bundle of microvilli. The protein is Unconventional myosin-VIIb (Myo7b) of Mus musculus (Mouse).